The following is a 147-amino-acid chain: Nucleoside diphosphate kinase (147 aa).

6 residues coordinate ATP: K9, F57, R85, T91, R102, and N112. The active-site Pros-phosphohistidine intermediate is the H115.

The protein belongs to the NDK family. In terms of assembly, homotetramer. The cofactor is Mg(2+).

It is found in the cytoplasm. It catalyses the reaction a 2'-deoxyribonucleoside 5'-diphosphate + ATP = a 2'-deoxyribonucleoside 5'-triphosphate + ADP. It carries out the reaction a ribonucleoside 5'-diphosphate + ATP = a ribonucleoside 5'-triphosphate + ADP. Its function is as follows. Major role in the synthesis of nucleoside triphosphates other than ATP. The ATP gamma phosphate is transferred to the NDP beta phosphate via a ping-pong mechanism, using a phosphorylated active-site intermediate. The polypeptide is Nucleoside diphosphate kinase (Thermosipho melanesiensis (strain DSM 12029 / CIP 104789 / BI429)).